The primary structure comprises 364 residues: MMNKFFTYYSINAVINCEIESTNPFIIANEIMRVDNSIARSYTIFNSFQNFIDIRYKFPYCHEIIVDHTKCQKSSDPSIDKLMREGGRLVFDIDVAYNEYPNIPDNIQDQIEIIIKHTFNKYFIDIDCDNLDYVWSHCNNPIKLSMHLTVKNILFDNWISMSKFFYGKFVYEWNKHNEWINGNDLIDKQIVKKRTSLRMVGSSKINGNKLVFKDDYCLKDSLIRIYSESDINQLDVININRIKSKYQNQLTTISTVSLKSNNSVYYSNDSNDSTISINPKLFGKLFFLINSLIPNIFRINKINGNIIQLTRLKSAKCLLSDKIHEKENAYLIIKPIDIDQEYYEIIFGCYRQCNLPFTIGKIHV.

This is an uncharacterized protein from Acanthamoeba polyphaga mimivirus (APMV).